Here is a 543-residue protein sequence, read N- to C-terminus: Protein phosphatase 1G (543 aa).

Glycine 2 carries N-myristoyl glycine lipidation. Arginine 22 is modified (omega-N-methylarginine). The PPM-type phosphatase domain occupies 26 to 503 (PYGFSAMQGW…DNMTCIIICF (478 aa)). Residues aspartate 60 and glycine 61 each contribute to the Mn(2+) site. Disordered stretches follow at residues 116 to 139 (QIAG…DVDN) and 163 to 326 (NCHK…SDSG). Threonine 122 bears the Phosphothreonine mark. Positions 123–139 (EDEDEKEKVADEDDVDN) are enriched in acidic residues. Serine 183 is modified (phosphoserine). Residues 259 to 310 (DSEDESDEAEEEEEDSEECSEEEDGYSSEEAENEEDEDDTEEAEEDDEEEEM) show a composition bias toward acidic residues. Lysine 381 carries the N6-acetyllysine modification. Mn(2+) is bound by residues aspartate 439 and aspartate 494. Residues 508 to 543 (TAAPQPESGKRKLEEVLSTEGAEENGNSDKKKAKRD) are disordered. Position 525 is a phosphoserine (serine 525).

Belongs to the PP2C family. Interacts with NOL3; may dephosphorylate NOL3. It depends on Mg(2+) as a cofactor. Mn(2+) serves as cofactor.

Its subcellular location is the cytoplasm. It localises to the membrane. The enzyme catalyses O-phospho-L-seryl-[protein] + H2O = L-seryl-[protein] + phosphate. It catalyses the reaction O-phospho-L-threonyl-[protein] + H2O = L-threonyl-[protein] + phosphate. This chain is Protein phosphatase 1G (PPM1G), found in Bos taurus (Bovine).